An 85-amino-acid polypeptide reads, in one-letter code: Neurotoxin beta-KTx 17 (85 aa).

A signal peptide spans 1–20 (MKQYIFFLALIVLVSTFAEA). Positions 21 to 37 (GKKTEILDKVKKVFSKG) are excised as a propeptide. Residues 49–85 (ELGCPFIEKWCEDHCESKKQVGKCENFDCSCVKLGGK) enclose the BetaSPN-type CS-alpha/beta domain. 3 disulfide bridges follow: C52–C72, C59–C77, and C63–C79.

This sequence belongs to the long chain scorpion toxin family. Class 2 subfamily. Expressed by the venom gland.

It is found in the secreted. Has a very weak effect to block voltage-gated potassium channel Kv1.1/KCNA1. This is Neurotoxin beta-KTx 17 from Lychas mucronatus (Chinese swimming scorpion).